The sequence spans 1673 residues: Protein TIC 214 (1673 aa).

A run of 6 helical transmembrane segments spans residues Ile-18–Gly-38, Phe-67–Leu-87, Pro-90–His-110, Leu-127–Leu-147, Val-175–Ile-195, and Ser-218–Gly-238.

This sequence belongs to the TIC214 family. In terms of assembly, part of the Tic complex.

Its subcellular location is the plastid. It localises to the chloroplast inner membrane. Its function is as follows. Involved in protein precursor import into chloroplasts. May be part of an intermediate translocation complex acting as a protein-conducting channel at the inner envelope. The polypeptide is Protein TIC 214 (Lactuca sativa (Garden lettuce)).